The chain runs to 252 residues: CLAVATA3/ESR (CLE)-related protein 4A-1 (252 aa).

An N-terminal signal peptide occupies residues 1 to 21 (MAKNAMLCLLILRVVLALAFA). The segment at 21 to 83 (ATNKKGDEEP…SNQLPNNNWM (63 aa)) is required for secretion from the host cytoplasm to the host apoplasm. N-linked (GlcNAc...) asparagine glycosylation is present at Asn-32. A disordered region spans residues 116–252 (RKTGMHSQRH…APAGPDPIHH (137 aa)). Composition is skewed to basic and acidic residues over residues 125-137 (HHEETTLEQEKRV) and 144-242 (PIHH…EKRG). Residues 127-135 (EETTLEQEK) form an A-1 repeat. The segment at 127-219 (EETTLEQEKR…HEETTLEQEK (93 aa)) is 6 X approximate repeat A. A CLE-1 repeat occupies 136–147 (RVAGAGPDPIHH). Positions 136–252 (RVAGAGPDPI…APAGPDPIHH (117 aa)) are 6 X approximate repeat CLE. Residues 148–156 (QDTTLEQEK) form an A-2 repeat. One copy of the CLE-2 repeat lies at 157-168 (RAVPAGPDPKHH). The A-3 repeat unit spans residues 169-177 (EETTLEQEK). One copy of the CLE-3 repeat lies at 178–189 (RAVPAGPDPKHH). The A-4 repeat unit spans residues 190-198 (EETTLEQEK). A CLE-4 repeat occupies 199–210 (RAVPAGPDPKHH). The stretch at 211–219 (EETTLEQEK) is one A-5 repeat. The stretch at 220-231 (RAVPAGPDPKHH) is one CLE-5 repeat. Residues 232 to 240 (EETTFEQEK) form an A-6 repeat. Residues 241 to 252 (RGAPAGPDPIHH) form a CLE-6 repeat.

This sequence belongs to the CLV3/ESR signal peptide family. Highly expressed exclusively within the dorsal esophageal gland cell during syncytium formation in host plants.

It is found in the secreted. Its subcellular location is the host cytoplasm. It localises to the host extracellular space. The protein localises to the extracellular space. The protein resides in the apoplast. Its function is as follows. Mimics host plant CLE extracellular signal peptides that regulate cell fate. May play a role in the differentiation or division of feeding cells (syncytia) induced in plant roots during infection. The polypeptide is CLAVATA3/ESR (CLE)-related protein 4A-1 (CLE-4A-1) (Globodera rostochiensis (Golden nematode worm)).